A 386-amino-acid polypeptide reads, in one-letter code: L-arabinitol 4-dehydrogenase (386 aa).

8 residues coordinate Zn(2+): cysteine 55, histidine 80, glutamate 81, cysteine 110, cysteine 113, cysteine 116, cysteine 124, and glutamate 165. NAD(+) contacts are provided by residues 192–193 (PI), aspartate 213, arginine 218, isoleucine 293, and 317–319 (QYR).

The protein belongs to the zinc-containing alcohol dehydrogenase family. As to quaternary structure, homotetramer. Zn(2+) is required as a cofactor.

The catalysed reaction is L-arabinitol + NAD(+) = L-xylulose + NADH + H(+). It functions in the pathway carbohydrate degradation; L-arabinose degradation via L-arabinitol; D-xylulose 5-phosphate from L-arabinose (fungal route): step 2/5. Catalyzes the NAD-dependent oxidation of L-arabinitol to L-xylulose in the fungal L-arabinose catabolic pathway. L-arabinose catabolism is important for using plant material as a carbon source. Not active with NADP as cosubstrate. The protein is L-arabinitol 4-dehydrogenase (ladA) of Aspergillus niger (strain ATCC MYA-4892 / CBS 513.88 / FGSC A1513).